Consider the following 316-residue polypeptide: Mycothiol acetyltransferase (316 aa).

N-acetyltransferase domains follow at residues 16–153 and 156–316; these read REVR…VPAV and VRIR…PAAN. Position 36 (E36) interacts with 1D-myo-inositol 2-(L-cysteinylamino)-2-deoxy-alpha-D-glucopyranoside. Residues 83-85 and 91-96 contribute to the acetyl-CoA site; these read LVV and RRGIGS. The 1D-myo-inositol 2-(L-cysteinylamino)-2-deoxy-alpha-D-glucopyranoside site is built by E183, K228, and E238. Acetyl-CoA contacts are provided by residues 242 to 244 and 249 to 255; these read VGV and QGRGLGQ. Residue Y283 coordinates 1D-myo-inositol 2-(L-cysteinylamino)-2-deoxy-alpha-D-glucopyranoside. An acetyl-CoA-binding site is contributed by 288-293; the sequence is NVAAVR.

It belongs to the acetyltransferase family. MshD subfamily. As to quaternary structure, monomer.

It catalyses the reaction 1D-myo-inositol 2-(L-cysteinylamino)-2-deoxy-alpha-D-glucopyranoside + acetyl-CoA = mycothiol + CoA + H(+). Its function is as follows. Catalyzes the transfer of acetyl from acetyl-CoA to desacetylmycothiol (Cys-GlcN-Ins) to form mycothiol. This chain is Mycothiol acetyltransferase, found in Mycolicibacterium paratuberculosis (strain ATCC BAA-968 / K-10) (Mycobacterium paratuberculosis).